Consider the following 292-residue polypeptide: MFSGSIVALITPFTPDGEVDYISLKKLVDFHVDAGTDAIVSVGTTGESATLTVEEHVKVVAKTVEFAEGRLPIIAGTGANATHEAVTFSRLLNNTGIAGYLSVTPYYNKPTQEGLFLHYNAIAQETDIPVILYNVPGRTAVDMRPETVARLSEIKNIVALKDATGDLSRVAKHREMCKEGFVLLSGDDATGLEFVKLGGQGVISVTNNIAAADMAKMMHLALDGKFDEAASINQRLMTLHKNLFIESSPIPVKWAAHKMGLIANGDLRLPLTQLSEPARPIVAQALSEACIY.

Threonine 45 is a pyruvate binding site. The active-site Proton donor/acceptor is tyrosine 133. The active-site Schiff-base intermediate with substrate is lysine 161. Position 203 (isoleucine 203) interacts with pyruvate.

It belongs to the DapA family. In terms of assembly, homotetramer; dimer of dimers.

Its subcellular location is the cytoplasm. The enzyme catalyses L-aspartate 4-semialdehyde + pyruvate = (2S,4S)-4-hydroxy-2,3,4,5-tetrahydrodipicolinate + H2O + H(+). It functions in the pathway amino-acid biosynthesis; L-lysine biosynthesis via DAP pathway; (S)-tetrahydrodipicolinate from L-aspartate: step 3/4. Catalyzes the condensation of (S)-aspartate-beta-semialdehyde [(S)-ASA] and pyruvate to 4-hydroxy-tetrahydrodipicolinate (HTPA). The polypeptide is 4-hydroxy-tetrahydrodipicolinate synthase (Vibrio cholerae serotype O1 (strain ATCC 39541 / Classical Ogawa 395 / O395)).